The sequence spans 432 residues: Adenylosuccinate synthetase (432 aa).

Residues 13–19 (GDEGKGK) and 41–43 (GHT) each bind GTP. D14 (proton acceptor) is an active-site residue. The Mg(2+) site is built by D14 and G41. Residues 14 to 17 (DEGK), 39 to 42 (NAGH), T130, R144, Q225, T240, and R304 contribute to the IMP site. H42 serves as the catalytic Proton donor. 300–306 (ATTGRRR) provides a ligand contact to substrate. GTP-binding positions include R306, 332-334 (KLD), and 415-417 (STG).

It belongs to the adenylosuccinate synthetase family. Homodimer. Requires Mg(2+) as cofactor.

It localises to the cytoplasm. It carries out the reaction IMP + L-aspartate + GTP = N(6)-(1,2-dicarboxyethyl)-AMP + GDP + phosphate + 2 H(+). The protein operates within purine metabolism; AMP biosynthesis via de novo pathway; AMP from IMP: step 1/2. In terms of biological role, plays an important role in the de novo pathway of purine nucleotide biosynthesis. Catalyzes the first committed step in the biosynthesis of AMP from IMP. This Sodalis glossinidius (strain morsitans) protein is Adenylosuccinate synthetase.